A 738-amino-acid polypeptide reads, in one-letter code: Probable trehalase (738 aa).

Positions 1-44 are disordered; it reads MLQGMPKRSGSISELHDPFSSPDVYYGPATDPRRQKQPNKYSRT. Residues Arg289, 296 to 297, Asn333, Arg342, 342 to 344, and Gly463 each bind substrate; these read WD and RSQ. Catalysis depends on proton donor/acceptor residues Asp465 and Glu660.

Belongs to the glycosyl hydrolase 37 family.

The catalysed reaction is alpha,alpha-trehalose + H2O = alpha-D-glucose + beta-D-glucose. In Eremothecium gossypii (strain ATCC 10895 / CBS 109.51 / FGSC 9923 / NRRL Y-1056) (Yeast), this protein is Probable trehalase (NTH2).